A 104-amino-acid polypeptide reads, in one-letter code: Small ribosomal subunit protein uS10 (104 aa).

It belongs to the universal ribosomal protein uS10 family. Part of the 30S ribosomal subunit.

Its function is as follows. Involved in the binding of tRNA to the ribosomes. In Helicobacter pylori (strain J99 / ATCC 700824) (Campylobacter pylori J99), this protein is Small ribosomal subunit protein uS10.